We begin with the raw amino-acid sequence, 175 residues long: Nascent polypeptide-associated complex subunit beta (175 aa).

2 disordered regions span residues 1 to 36 (MDKEKLAKLQSQVRIGGKGTPRRKVVKKSVTSSQGD) and 129 to 175 (RQAA…EELE). Positions 34-101 (QGDDRKLQAA…GQTKELTELV (68 aa)) constitute an NAC-A/B domain. The segment covering 149-163 (EGDDEIPDLVDNFDE) has biased composition (acidic residues). Basic and acidic residues predominate over residues 164-175 (AEVKKSDLEELE).

It belongs to the NAC-beta family. As to quaternary structure, part of the nascent polypeptide-associated complex (NAC), consisting of EGD2 and EGD1. NAC associates with ribosomes via EGD1.

Its subcellular location is the cytoplasm. The protein localises to the nucleus. Functionally, component of the nascent polypeptide-associated complex (NAC), a dynamic component of the ribosomal exit tunnel, protecting the emerging polypeptides from interaction with other cytoplasmic proteins to ensure appropriate nascent protein targeting. The NAC complex also promotes mitochondrial protein import by enhancing productive ribosome interactions with the outer mitochondrial membrane and blocks the inappropriate interaction of ribosomes translating non-secretory nascent polypeptides with translocation sites in the membrane of the endoplasmic reticulum. EGD1 may act as a transcription factor that exert a negative effect on the expression of several genes that are transcribed by RNA polymerase II. This is Nascent polypeptide-associated complex subunit beta (EGD1) from Cryptococcus neoformans var. neoformans serotype D (strain B-3501A) (Filobasidiella neoformans).